A 481-amino-acid chain; its full sequence is Argininosuccinate lyase (481 aa).

This sequence belongs to the lyase 1 family. Argininosuccinate lyase subfamily.

The protein resides in the cytoplasm. The catalysed reaction is 2-(N(omega)-L-arginino)succinate = fumarate + L-arginine. It functions in the pathway amino-acid biosynthesis; L-arginine biosynthesis; L-arginine from L-ornithine and carbamoyl phosphate: step 3/3. This Methanococcus maripaludis (strain C6 / ATCC BAA-1332) protein is Argininosuccinate lyase.